The sequence spans 484 residues: Crt homolog 2 (484 aa).

The Cytoplasmic portion of the chain corresponds to 1 to 57; the sequence is MSEEKLPLLSPLNENDIENDYKDENLKSDLDKLSNVKKQSIIQRFKDYLKNSISKQT. Residues 58–78 traverse the membrane as a helical segment; sequence ATVLVYVVLYILSGVINSLLL. Topologically, residues 79-94 are vacuolar; the sequence is KKVMNVFTNYGFFLNQ. The helical transmembrane segment at 95–115 threads the bilayer; sequence LTNYGYVPIFGAIVLYKILFT. The Cytoplasmic portion of the chain corresponds to 116–128; that stretch reads NDIPKDTRSFPQW. A helical transmembrane segment spans residues 129–149; sequence KFVIMGALDAVTGYFVVIGGI. At 150 to 154 the chain is on the vacuolar side; sequence KTTGP. A helical transmembrane segment spans residues 155-175; that stretch reads LQQLLNQSVIPFTMLLSFIFL. At 176–178 the chain is on the cytoplasmic side; the sequence is KER. A helical membrane pass occupies residues 179–199; the sequence is YSLIQLGGALIIIGGVVVSLI. The Vacuolar portion of the chain corresponds to 200–210; that stretch reads PSLTGGNTSGN. A glycan (N-linked (GlcNAc...) asparagine) is linked at Asn206. A helical transmembrane segment spans residues 211 to 231; sequence MLFYNFFYLISMIPYAFSNVY. The Cytoplasmic portion of the chain corresponds to 232–244; it reads KAIGFSTVEDMDV. Residues 245-265 traverse the membrane as a helical segment; the sequence is WYLQYFDALYQSLVGTVLFPI. Topologically, residues 266–328 are vacuolar; that stretch reads NNWLPPPSDM…LGCDNCHGAW (63 aa). An N-linked (GlcNAc...) asparagine glycan is attached at Asn302. The helical transmembrane segment at 329–349 threads the bilayer; the sequence is VVVLIYMAVNVLYNVFILLVL. At 350 to 355 the chain is on the cytoplasmic side; it reads KHAGAT. The helical transmembrane segment at 356–378 threads the bilayer; that stretch reads VFSIANTLRLPLTNIAFSFKFIM. Residues 379–382 lie on the Vacuolar side of the membrane; it reads GSDS. The chain crosses the membrane as a helical span at residues 383–403; it reads NPFSGLSVAGLCIILLGLGGY. At 404 to 484 the chain is on the cytoplasmic side; the sequence is RVGSMIKQKK…RNQNSIYGDQ (81 aa).

The protein belongs to the CRT-like transporter family.

The protein resides in the vacuole membrane. Nutrient transporter. Involved in maintaining the osmotic homeostasis of the digestive vacuole. This chain is Crt homolog 2 (crtp2), found in Dictyostelium discoideum (Social amoeba).